A 483-amino-acid chain; its full sequence is GTPase Der (483 aa).

2 consecutive EngA-type G domains span residues phenylalanine 3–arginine 167 and leucine 212–asparagine 387. Residues glycine 9 to serine 16, aspartate 56 to leucine 60, asparagine 119 to glutamate 122, glycine 218 to serine 225, aspartate 265 to leucine 269, and asparagine 330 to aspartate 333 contribute to the GTP site. Residues arginine 388–aspartate 472 form the KH-like domain.

It belongs to the TRAFAC class TrmE-Era-EngA-EngB-Septin-like GTPase superfamily. EngA (Der) GTPase family. In terms of assembly, associates with the 50S ribosomal subunit.

Its function is as follows. GTPase that plays an essential role in the late steps of ribosome biogenesis. This Brucella anthropi (strain ATCC 49188 / DSM 6882 / CCUG 24695 / JCM 21032 / LMG 3331 / NBRC 15819 / NCTC 12168 / Alc 37) (Ochrobactrum anthropi) protein is GTPase Der.